Consider the following 134-residue polypeptide: Profilin-3 (134 aa).

C13 and C118 are joined by a disulfide. The Involved in PIP2 interaction motif lies at 84–100; sequence AVIRGKKGSGGITIKKT. T114 carries the phosphothreonine modification.

It belongs to the profilin family. Occurs in many kinds of cells as a complex with monomeric actin in a 1:1 ratio. Phosphorylated by MAP kinases.

Its subcellular location is the cytoplasm. It is found in the cytoskeleton. In terms of biological role, binds to actin and affects the structure of the cytoskeleton. At high concentrations, profilin prevents the polymerization of actin, whereas it enhances it at low concentrations. In Olea europaea (Common olive), this protein is Profilin-3.